The sequence spans 287 residues: MQIFGKILGAFFGFLFGGVFGALFGLFIGHQFDKARRLSQAGFKTAGFGQGPSQAQRQEEFFKSAFAVMGHVAKAKGQVTKEEIQLASAMMDRMSLHGEQRRAAQDAFREGKERDFPLEQVLERVKIATSGRFDLLQFFLELQISAAFADGDVHPSERNVLHKIARGLGFSSEQLERRLQMQEAAFRFQRQGGFGGQQHQSHHSSSHGGWQQASQTDRLADAYKILGIDANADGKEVKRAYRKLMNEHHPDKLMAKGLPPEMMNMAKEKSQEIQSAYDLIKKEKGFK.

Topologically, residues Met-1–Lys-6 are periplasmic. A helical transmembrane segment spans residues Ile-7–His-30. The Cytoplasmic portion of the chain corresponds to Gln-31–Lys-287. Positions Gly-192 to Ala-213 are disordered. The J domain maps to Asp-221–Lys-287.

In terms of assembly, homodimer.

The protein resides in the cell inner membrane. In terms of biological role, regulatory DnaK co-chaperone. Direct interaction between DnaK and DjlA is needed for the induction of the wcaABCDE operon, involved in the synthesis of a colanic acid polysaccharide capsule, possibly through activation of the RcsB/RcsC phosphotransfer signaling pathway. The colanic acid capsule may help the bacterium survive conditions outside the host. The polypeptide is Co-chaperone protein DjlA (Vibrio vulnificus (strain CMCP6)).